Reading from the N-terminus, the 1393-residue chain is DNA-directed RNA polymerase subunit beta' (1393 aa).

Zn(2+) is bound by residues C72, C74, C87, and C90. Residues D463, D465, and D467 each coordinate Mg(2+). Zn(2+) contacts are provided by C812, C887, C894, and C897.

This sequence belongs to the RNA polymerase beta' chain family. The RNAP catalytic core consists of 2 alpha, 1 beta, 1 beta' and 1 omega subunit. When a sigma factor is associated with the core the holoenzyme is formed, which can initiate transcription. Requires Mg(2+) as cofactor. Zn(2+) serves as cofactor.

The catalysed reaction is RNA(n) + a ribonucleoside 5'-triphosphate = RNA(n+1) + diphosphate. Its function is as follows. DNA-dependent RNA polymerase catalyzes the transcription of DNA into RNA using the four ribonucleoside triphosphates as substrates. In Chlamydia abortus (strain DSM 27085 / S26/3) (Chlamydophila abortus), this protein is DNA-directed RNA polymerase subunit beta'.